The following is an 86-amino-acid chain: Small ribosomal subunit protein bS16 (86 aa).

Belongs to the bacterial ribosomal protein bS16 family.

In Borrelia garinii subsp. bavariensis (strain ATCC BAA-2496 / DSM 23469 / PBi) (Borreliella bavariensis), this protein is Small ribosomal subunit protein bS16.